The sequence spans 168 residues: Phosphopantetheine adenylyltransferase (168 aa).

Thr14 lines the substrate pocket. ATP-binding positions include 14 to 15 and His22; that span reads TF. Lys46, Leu78, and Arg92 together coordinate substrate. Residues 93–95, Glu103, and 128–134 each bind ATP; these read GLR and YSFISSS.

This sequence belongs to the bacterial CoaD family. In terms of assembly, homohexamer. Requires Mg(2+) as cofactor.

It localises to the cytoplasm. The catalysed reaction is (R)-4'-phosphopantetheine + ATP + H(+) = 3'-dephospho-CoA + diphosphate. It functions in the pathway cofactor biosynthesis; coenzyme A biosynthesis; CoA from (R)-pantothenate: step 4/5. In terms of biological role, reversibly transfers an adenylyl group from ATP to 4'-phosphopantetheine, yielding dephospho-CoA (dPCoA) and pyrophosphate. The chain is Phosphopantetheine adenylyltransferase from Xanthomonas oryzae pv. oryzae (strain MAFF 311018).